Here is an 847-residue protein sequence, read N- to C-terminus: Bifunctional protein argC, mitochondrial (847 aa).

The interval 100-331 (QIVLVKIGGG…PPSTSITITS (232 aa)) is acetylglutamate kinase. One can recognise an N-acetyltransferase domain in the interval 352–508 (GEVMHSHESP…CLSQSSTYLS (157 aa)). The N-acetyl-gamma-glutamyl-phosphate reductase stretch occupies residues 531-846 (FRVGLIGARG…LDELASIKNE (316 aa)). Cysteine 665 is an active-site residue.

This sequence in the N-terminal section; belongs to the acetylglutamate kinase family. The protein in the C-terminal section; belongs to the NAGSA dehydrogenase family.

It is found in the mitochondrion. It carries out the reaction N-acetyl-L-glutamate 5-semialdehyde + phosphate + NADP(+) = N-acetyl-L-glutamyl 5-phosphate + NADPH + H(+). The enzyme catalyses N-acetyl-L-glutamate + ATP = N-acetyl-L-glutamyl 5-phosphate + ADP. It functions in the pathway amino-acid biosynthesis; L-arginine biosynthesis; N(2)-acetyl-L-ornithine from L-glutamate: step 2/4. Its pathway is amino-acid biosynthesis; L-arginine biosynthesis; N(2)-acetyl-L-ornithine from L-glutamate: step 3/4. The protein is Bifunctional protein argC, mitochondrial (argC) of Dictyostelium discoideum (Social amoeba).